The following is a 260-amino-acid chain: Imidazole glycerol phosphate synthase subunit HisF (260 aa).

Active-site residues include Asp11 and Asp130.

This sequence belongs to the HisA/HisF family. Heterodimer of HisH and HisF.

Its subcellular location is the cytoplasm. It catalyses the reaction 5-[(5-phospho-1-deoxy-D-ribulos-1-ylimino)methylamino]-1-(5-phospho-beta-D-ribosyl)imidazole-4-carboxamide + L-glutamine = D-erythro-1-(imidazol-4-yl)glycerol 3-phosphate + 5-amino-1-(5-phospho-beta-D-ribosyl)imidazole-4-carboxamide + L-glutamate + H(+). It functions in the pathway amino-acid biosynthesis; L-histidine biosynthesis; L-histidine from 5-phospho-alpha-D-ribose 1-diphosphate: step 5/9. Functionally, IGPS catalyzes the conversion of PRFAR and glutamine to IGP, AICAR and glutamate. The HisF subunit catalyzes the cyclization activity that produces IGP and AICAR from PRFAR using the ammonia provided by the HisH subunit. The chain is Imidazole glycerol phosphate synthase subunit HisF from Psychrobacter cryohalolentis (strain ATCC BAA-1226 / DSM 17306 / VKM B-2378 / K5).